The chain runs to 174 residues: Small ribosomal subunit protein uS5 (174 aa).

The 64-residue stretch at 19–82 folds into the S5 DRBM domain; it reads LREKMIAINR…EEARRNMTKI (64 aa).

It belongs to the universal ribosomal protein uS5 family. Part of the 30S ribosomal subunit. Contacts proteins S4 and S8.

In terms of biological role, with S4 and S12 plays an important role in translational accuracy. Located at the back of the 30S subunit body where it stabilizes the conformation of the head with respect to the body. This chain is Small ribosomal subunit protein uS5, found in Albidiferax ferrireducens (strain ATCC BAA-621 / DSM 15236 / T118) (Rhodoferax ferrireducens).